The following is a 301-amino-acid chain: Protoheme IX farnesyltransferase (301 aa).

The next 9 membrane-spanning stretches (helical) occupy residues 9–29, 42–62, 89–109, 113–133, 142–162, 168–188, 211–231, 232–252, and 280–300; these read VLAY…VATI, IALI…ANSL, TSHA…WLWW, LLAG…YTMV, VVWG…AVTG, PIVL…ALAM, VTKQ…TLVP, AAGV…LLMA, and VVFV…GSLL.

Belongs to the UbiA prenyltransferase family. Protoheme IX farnesyltransferase subfamily.

Its subcellular location is the cell membrane. It catalyses the reaction heme b + (2E,6E)-farnesyl diphosphate + H2O = Fe(II)-heme o + diphosphate. Its pathway is porphyrin-containing compound metabolism; heme O biosynthesis; heme O from protoheme: step 1/1. In terms of biological role, converts heme B (protoheme IX) to heme O by substitution of the vinyl group on carbon 2 of heme B porphyrin ring with a hydroxyethyl farnesyl side group. The protein is Protoheme IX farnesyltransferase of Rhodococcus jostii (strain RHA1).